A 329-amino-acid polypeptide reads, in one-letter code: Acetyl-coenzyme A carboxylase carboxyl transferase subunit alpha (329 aa).

The region spanning 40–294 (QLETLAARRR…KTSILRHLTE (255 aa)) is the CoA carboxyltransferase C-terminal domain.

The protein belongs to the AccA family. As to quaternary structure, acetyl-CoA carboxylase is a heterohexamer composed of biotin carboxyl carrier protein (AccB), biotin carboxylase (AccC) and two subunits each of ACCase subunit alpha (AccA) and ACCase subunit beta (AccD).

It localises to the cytoplasm. It carries out the reaction N(6)-carboxybiotinyl-L-lysyl-[protein] + acetyl-CoA = N(6)-biotinyl-L-lysyl-[protein] + malonyl-CoA. It functions in the pathway lipid metabolism; malonyl-CoA biosynthesis; malonyl-CoA from acetyl-CoA: step 1/1. In terms of biological role, component of the acetyl coenzyme A carboxylase (ACC) complex. First, biotin carboxylase catalyzes the carboxylation of biotin on its carrier protein (BCCP) and then the CO(2) group is transferred by the carboxyltransferase to acetyl-CoA to form malonyl-CoA. The polypeptide is Acetyl-coenzyme A carboxylase carboxyl transferase subunit alpha (Prochlorococcus marinus (strain SARG / CCMP1375 / SS120)).